The sequence spans 351 residues: Histidinol-phosphate aminotransferase (351 aa).

An N6-(pyridoxal phosphate)lysine modification is found at K221.

Belongs to the class-II pyridoxal-phosphate-dependent aminotransferase family. Histidinol-phosphate aminotransferase subfamily. As to quaternary structure, homodimer. Pyridoxal 5'-phosphate is required as a cofactor.

The catalysed reaction is L-histidinol phosphate + 2-oxoglutarate = 3-(imidazol-4-yl)-2-oxopropyl phosphate + L-glutamate. Its pathway is amino-acid biosynthesis; L-histidine biosynthesis; L-histidine from 5-phospho-alpha-D-ribose 1-diphosphate: step 7/9. This Staphylococcus epidermidis (strain ATCC 12228 / FDA PCI 1200) protein is Histidinol-phosphate aminotransferase.